The chain runs to 318 residues: MNYQVLLYYKYTTIDDPEQFAQDHLAFCKAHHLKGRILVSTEGINGTLSGTKEETEQYMAHMHADERFKDMVFKIDEAEGHAFKKMHVRPRKEIVALDLEEDVDPRHTTGQYLSPVEFRKALEDDDTVIIDARNDYEFDLGHFRGAIRPNITRFRDLPDWIKENKALFADKKVVTYCTGGIRCEKFSGWLLKEGFEDVAQLHGGIATYGKDPETKGQYWDGKMYVFDDRISVDINQVEKTIIGKDWFDGKPCERYINCANPECNKQILVSEENEAKYLGACSYDCAKHERNRYVQANNISGNEWQQRLTNFDDLHQHA.

One can recognise a Rhodanese domain in the interval 123–217; it reads EDDDTVIIDA…YGKDPETKGQ (95 aa). C177 functions as the Cysteine persulfide intermediate in the catalytic mechanism.

The protein belongs to the TrhO family.

The catalysed reaction is uridine(34) in tRNA + AH2 + O2 = 5-hydroxyuridine(34) in tRNA + A + H2O. Catalyzes oxygen-dependent 5-hydroxyuridine (ho5U) modification at position 34 in tRNAs. The polypeptide is tRNA uridine(34) hydroxylase (Staphylococcus aureus (strain MRSA252)).